Consider the following 381-residue polypeptide: Phthiodiolone/phenolphthiodiolone dimycocerosates ketoreductase (381 aa).

The protein belongs to the mer family. Phthiodiolone/phenolphthiodiolone dimycocerosates ketoreductase subfamily.

Its function is as follows. Catalyzes the reduction of the keto moiety of phthiodiolone dimycocerosates (DIM B) and glycosylated phenolphthiodiolone dimycocerosates to form the intermediate compounds phthiotriol and glycosylated phenolphthiotriol dimycocerosates during phthiocerol dimycocerosates (DIM A) and glycosylated phenolphthiocerol dimycocerosates (PGL) biosynthesis. This is Phthiodiolone/phenolphthiodiolone dimycocerosates ketoreductase from Mycobacterium tuberculosis (strain CDC 1551 / Oshkosh).